A 259-amino-acid polypeptide reads, in one-letter code: UPF0246 protein SG0407 (259 aa).

Belongs to the UPF0246 family.

The polypeptide is UPF0246 protein SG0407 (Sodalis glossinidius (strain morsitans)).